The primary structure comprises 317 residues: Olfactory receptor 5K17 (317 aa).

Over 1-28 (MMKANHSLTVEFILIGFSDHTDLKTLLF) the chain is Extracellular. An N-linked (GlcNAc...) asparagine glycan is attached at N5. A helical membrane pass occupies residues 29 to 49 (LLFSAIYLVTIVGNLGLVALI). The Cytoplasmic portion of the chain corresponds to 50–56 (YMEPRLH). The chain crosses the membrane as a helical span at residues 57–77 (TPMYIFLGNLALMDSCCSCAI). Topologically, residues 78-93 (TPKMLENFFSVDRRIS) are extracellular. A helical transmembrane segment spans residues 94–114 (LYECMVQFYFLCLAETADCFL). C97 and C189 form a disulfide bridge. Topologically, residues 115–144 (LAAMAYDRYVAICNPLQYHTMMSKKLSIQM) are cytoplasmic. Residues 145–165 (SIGTFIASNLHSLIHTGCLLR) traverse the membrane as a helical segment. Residues 166–198 (LNFCKSRRIDHFFCDILPLYKLSCTDPFINELM) lie on the Extracellular side of the membrane. The chain crosses the membrane as a helical span at residues 199-219 (LYIFSMPIQVFTITTVLVSYS). The Cytoplasmic segment spans residues 220–239 (CILLTVFKMKSKDGRGKAFS). The chain crosses the membrane as a helical span at residues 240–259 (TCASHFFSVSIFYICLLMYI). Residues 260 to 268 (GPSKNSNKD) lie on the Extracellular side of the membrane. The helical transmembrane segment at 269–289 (IPVGVFYTIVIPLLNPFIYSL) threads the bilayer. Residues 290-317 (RNKEVVNAVKKVMKTHSIFKNSSASIAH) are Cytoplasmic-facing.

Belongs to the G-protein coupled receptor 1 family.

Its subcellular location is the cell membrane. In terms of biological role, potential odorant receptor. This is Olfactory receptor 5K17 from Mus musculus (Mouse).